We begin with the raw amino-acid sequence, 161 residues long: MSKLTHFDAGGQAHMVDVGEKAETRRVAVAHGSIRMLPATLSIITAGDAKKGDVLGIARIAAIQGSKRTAELIPLCHPIPLTRIGVEFSIDDAVSAVHCQVTAETVGRTGVEMEALTATSIALLTIYDMCKAVDRGMTIGEIRLLEKLGGKSGHWQAGNND.

Substrate contacts are provided by residues 75–77 and 113–114; these read LCH and ME. Aspartate 128 is a catalytic residue.

This sequence belongs to the MoaC family. As to quaternary structure, homohexamer; trimer of dimers.

The enzyme catalyses (8S)-3',8-cyclo-7,8-dihydroguanosine 5'-triphosphate = cyclic pyranopterin phosphate + diphosphate. It participates in cofactor biosynthesis; molybdopterin biosynthesis. Catalyzes the conversion of (8S)-3',8-cyclo-7,8-dihydroguanosine 5'-triphosphate to cyclic pyranopterin monophosphate (cPMP). This Methylobacillus flagellatus (strain ATCC 51484 / DSM 6875 / VKM B-1610 / KT) protein is Cyclic pyranopterin monophosphate synthase.